The sequence spans 125 residues: Phosphoribosyl-AMP cyclohydrolase (125 aa).

Residue Asp-74 participates in Mg(2+) binding. Cys-75 contacts Zn(2+). Mg(2+) contacts are provided by Asp-76 and Asp-78. Zn(2+) is bound by residues Cys-92 and Cys-99.

Belongs to the PRA-CH family. Homodimer. It depends on Mg(2+) as a cofactor. Requires Zn(2+) as cofactor.

It localises to the cytoplasm. The catalysed reaction is 1-(5-phospho-beta-D-ribosyl)-5'-AMP + H2O = 1-(5-phospho-beta-D-ribosyl)-5-[(5-phospho-beta-D-ribosylamino)methylideneamino]imidazole-4-carboxamide. Its pathway is amino-acid biosynthesis; L-histidine biosynthesis; L-histidine from 5-phospho-alpha-D-ribose 1-diphosphate: step 3/9. In terms of biological role, catalyzes the hydrolysis of the adenine ring of phosphoribosyl-AMP. In Geobacter metallireducens (strain ATCC 53774 / DSM 7210 / GS-15), this protein is Phosphoribosyl-AMP cyclohydrolase.